Consider the following 455-residue polypeptide: Membrane protein Pbs54 (455 aa).

A helical transmembrane segment spans residues 12–32 (IISIIILILRISLFSCAEHLF). N-linked (GlcNAc...) asparagine glycans are attached at residues N41, N102, and N125. Helical transmembrane passes span 181 to 201 (IFLI…LFNG), 220 to 240 (FIFF…LSCI), 244 to 264 (ILTF…FYLF), 285 to 305 (ILIG…IIFI), 312 to 332 (FLVK…IFFL), and 346 to 366 (FVFS…FWNI). N-linked (GlcNAc...) asparagine glycosylation is present at N373. The chain crosses the membrane as a helical span at residues 398 to 418 (NMFALFMIFAMSILSIIFPRI).

The protein resides in the cell projection. It is found in the cilium. It localises to the flagellum. Its subcellular location is the cell membrane. In terms of biological role, plays a role in gamete fertilization. Required for the successful transmission of parasites to mosquito. This Plasmodium berghei (strain Anka) protein is Membrane protein Pbs54.